We begin with the raw amino-acid sequence, 121 residues long: Large ribosomal subunit protein uL18 (121 aa).

The protein belongs to the universal ribosomal protein uL18 family. As to quaternary structure, part of the 50S ribosomal subunit; part of the 5S rRNA/L5/L18/L25 subcomplex. Contacts the 5S and 23S rRNAs.

This is one of the proteins that bind and probably mediate the attachment of the 5S RNA into the large ribosomal subunit, where it forms part of the central protuberance. This Verminephrobacter eiseniae (strain EF01-2) protein is Large ribosomal subunit protein uL18.